A 661-amino-acid polypeptide reads, in one-letter code: Tegument protein UL46 homolog (661 aa).

The segment at 1-31 (MFSRFARSFSSDDRTRKSYDGSYQSFNAGER) is disordered. Positions 10–19 (SSDDRTRKSY) are enriched in basic and acidic residues. The next 2 helical transmembrane spans lie at 299–319 (AGTG…TALL) and 339–359 (AAIV…QYLI).

The protein belongs to the herpesviridae HHV-1 VP11/12 protein family. Phosphorylated by host LCK. The phosphorylation seems to be lymphocyte-specific.

It is found in the virion tegument. It localises to the host cytoplasm. The protein resides in the host membrane. Its function is as follows. Plays a role in the activation of the host PI3K/AKT pathway to promote cell survival. Interacts with and activates PI3KR1 in order to phosphorylate host AKT on its activating residues. Activates the host AP-1 pathway by triggering phosphorylation of host ERK1/2. Participates in host BIM and BAD phosphorylation, leading to apoptosis inhibition. The chain is Tegument protein UL46 homolog from Varicella-zoster virus (strain Oka vaccine) (HHV-3).